A 317-amino-acid polypeptide reads, in one-letter code: MYTKIIGTGSYLPEQVRTNADLEKMVETSDEWIVTRTGIRERHIAAPNETVATMGFTAANRAIEMAGIDKDQIGLIVVATTSATHAFPSAACQIQSMLGIKGCPAFDVAAACAGFTYALSIADQYVKSGAVKHALVVGSDVLARTCDPGDRGTIIIFGDGAGAAVLSASEEPGIISTHLHADGRYGELLTLPNADRVNPDNPIYLTMAGNEVFKVAVTELAHIVDETLAANNLDRSELDWLVPHQANLRIISATAKKLGMSMDNVVVTLDRHGNTSAASVPCALDEAVRDGRIKAGQLVLLEAFGGGFTWGSALIRF.

Catalysis depends on residues C112 and H244. Positions Q245 to R249 are ACP-binding. Residue N274 is part of the active site.

The protein belongs to the thiolase-like superfamily. FabH family. As to quaternary structure, homodimer.

It is found in the cytoplasm. The enzyme catalyses malonyl-[ACP] + acetyl-CoA + H(+) = 3-oxobutanoyl-[ACP] + CO2 + CoA. It participates in lipid metabolism; fatty acid biosynthesis. Catalyzes the condensation reaction of fatty acid synthesis by the addition to an acyl acceptor of two carbons from malonyl-ACP. Catalyzes the first condensation reaction which initiates fatty acid synthesis and may therefore play a role in governing the total rate of fatty acid production. Possesses both acetoacetyl-ACP synthase and acetyl transacylase activities. Its substrate specificity determines the biosynthesis of branched-chain and/or straight-chain of fatty acids. This Salmonella paratyphi B (strain ATCC BAA-1250 / SPB7) protein is Beta-ketoacyl-[acyl-carrier-protein] synthase III.